The primary structure comprises 130 residues: Small ribosomal subunit protein uS9 (130 aa).

The protein belongs to the universal ribosomal protein uS9 family.

The protein is Small ribosomal subunit protein uS9 of Anaeromyxobacter dehalogenans (strain 2CP-1 / ATCC BAA-258).